The sequence spans 369 residues: Deoxyuridine 5'-triphosphate nucleotidohydrolase (369 aa).

Substrate contacts are provided by residues R258–S260 and F364–G365.

The protein belongs to the dUTPase family. Requires Mg(2+) as cofactor.

The enzyme catalyses dUTP + H2O = dUMP + diphosphate + H(+). Its function is as follows. Involved in nucleotide metabolism: produces dUMP, the immediate precursor of thymidine nucleotides and decreases the intracellular concentration of dUTP to avoid uracil incorporation into viral DNA. In Homo sapiens (Human), this protein is Deoxyuridine 5'-triphosphate nucleotidohydrolase.